A 212-amino-acid polypeptide reads, in one-letter code: MARLSQELQDYFFKEDRGPTVNLAQVLAIAKEKIFGIVLVILSLPSALPIPAPGYSTPFGVLIFLVAIQLMAGRQELWLPLSWQSKTIKTSKAQGIVKAGLPWLKRLEAIAHPRFPLVCQSRLGKILMGITVGSMAISMMIPIPGTNTLPAMSIFITGFGLQEDDGLITGAGMIFSVLIGVLMVSVIYVFFNGGITIIDILKDWLKVQFGGA.

The next 4 helical transmembrane spans lie at 34–54, 59–79, 126–146, and 171–191; these read IFGI…PAPG, FGVL…ELWL, ILMG…IPGT, and AGMI…YVFF.

This sequence to R.meliloti ExoD.

The protein localises to the cell membrane. This is an uncharacterized protein from Synechocystis sp. (strain ATCC 27184 / PCC 6803 / Kazusa).